Consider the following 432-residue polypeptide: Guanine/hypoxanthine permease PbuO (432 aa).

10 helical membrane passes run 15 to 35, 51 to 71, 92 to 112, 133 to 153, 174 to 194, 196 to 216, 234 to 254, 340 to 360, 379 to 399, and 412 to 432; these read IIAG…NPVI, IIAS…PIAI, GITY…FIIL, ITTG…GIVA, LVGL…ALFI, MAAT…KGFM, FGDV…LVTI, ALSG…SLMM, LVIL…LGFI, and REIH…LFIL.

The protein belongs to the nucleobase:cation symporter-2 (NCS2) (TC 2.A.40) family. Azg-like subfamily.

Its subcellular location is the cell membrane. In terms of biological role, involved in the uptake of the purine bases hypoxanthine and guanine. May work at purine concentrations higher than 100 uM. In Bacillus subtilis (strain 168), this protein is Guanine/hypoxanthine permease PbuO (pbuO).